A 496-amino-acid polypeptide reads, in one-letter code: Pre-glycoprotein polyprotein GP complex (496 aa).

Glycine 2 is lipidated: N-myristoyl glycine; by host. The Extracellular portion of the chain corresponds to 2–17 (GQLISFFQEIPVFLQE). A helical membrane pass occupies residues 18–32 (ALNIALVAVSLIAVI). Lysine 33 is a topological domain (cytoplasmic). A helical membrane pass occupies residues 34–53 (GIINLYKSGLFQFIFFLLLA). Extracellular loops occupy residues 54–58 (GRSCS) and 59–435 (DGTF…TLVD). A Zn(2+)-binding site is contributed by cysteine 57. N-linked (GlcNAc...) asparagine; by host glycosylation is found at asparagine 83, asparagine 95, asparagine 137, asparagine 166, and asparagine 178. 6 disulfides stabilise this stretch: cysteine 92–cysteine 237, cysteine 135–cysteine 164, cysteine 207–cysteine 213, cysteine 282–cysteine 295, cysteine 304–cysteine 313, and cysteine 367–cysteine 388. N-linked (GlcNAc...) asparagine; by host glycans are attached at residues asparagine 368, asparagine 376, asparagine 393, and asparagine 398. A helical membrane pass occupies residues 436–456 (ICFWSTVFFTASLFLHLVGIP). The Cytoplasmic segment spans residues 457 to 496 (THRHLKGEACPLPHKLDSFGGCRCGKYPRLRKPTIWHKRH). 7 residues coordinate Zn(2+): histidine 458, histidine 460, cysteine 466, histidine 470, cysteine 478, cysteine 480, and histidine 496.

This sequence belongs to the arenaviridae GPC protein family. In terms of assembly, homotetramer; disulfide-linked. Interacts with host TFRC. Homotetramer. GP2 homotetramers bind through ionic interactions with GP1 homotetramers to form the GP complex together with the stable signal peptide. The GP-C polyprotein interacts with the host protease MBTPS1/SKI-1 resulting in the polyprotein processing. In terms of processing, specific enzymatic cleavages in vivo yield mature proteins. GP-C polyprotein is cleaved in the endoplasmic reticulum by the host protease MBTPS1. Only cleaved glycoprotein is incorporated into virions. The SSP remains stably associated with the GP complex following cleavage by signal peptidase and plays crucial roles in the trafficking of GP through the secretory pathway. Post-translationally, myristoylation is necessary for GP2-mediated fusion activity.

It localises to the virion membrane. It is found in the host endoplasmic reticulum membrane. The protein resides in the host Golgi apparatus membrane. Its subcellular location is the host cell membrane. In terms of biological role, class I viral fusion protein that directs fusion of viral and host endosomal membranes, leading to delivery of the nucleocapsid into the cytoplasm. Membrane fusion is mediated by irreversible conformational changes induced upon acidification in the endosome. Stable signal peptide (SSP): cleaved and functions as a signal peptide. In addition, it is also retained as the third component of the GP complex. The SSP is required for efficient glycoprotein expression, post-translational maturation cleavage of GP1 and GP2, glycoprotein transport to the cell surface plasma membrane, formation of infectious virus particles, and acid pH-dependent glycoprotein-mediated cell fusion. Functionally, interacts with the host receptor. Mediates virus attachment to host TFRC. This attachment induces virion internalization predominantly through clathrin-mediated endocytosis. This is Pre-glycoprotein polyprotein GP complex from Machupo virus (MACV).